We begin with the raw amino-acid sequence, 432 residues long: RING finger protein 44 (432 aa).

The disordered stretch occupies residues 1–86 (MRPWALAVTR…GGSPRMLHPA (86 aa)). Positions 56-65 (QQPPSRPPHL) are enriched in pro residues. The RING-type; atypical zinc-finger motif lies at 380–421 (CVVCFSDFEARQLLRVLPCNHEFHTKCVDKWLKANRTCPICR).

The polypeptide is RING finger protein 44 (RNF44) (Homo sapiens (Human)).